Reading from the N-terminus, the 63-residue chain is Beta-defensin 4 (63 aa).

The first 22 residues, 1–22 (MRIHYLLFTFLLVLLSPLAAFT), serve as a signal peptide directing secretion. Residue Gln-23 is modified to Pyrrolidone carboxylic acid. Intrachain disulfides connect Cys-31–Cys-59, Cys-38–Cys-52, and Cys-42–Cys-60.

The protein belongs to the beta-defensin family. As to expression, tongue, esophagus and trachea.

Its subcellular location is the secreted. Functionally, exhibits antimicrobial activity against Gram-negative bacteria and Gram-positive bacteria. May act as a ligand for C-C chemokine receptor CCR6. Can bind to mouse (but not human) CCR6 and induce chemotactic activity of CCR6-expressing cells. This chain is Beta-defensin 4 (Defb4), found in Mus musculus (Mouse).